A 229-amino-acid chain; its full sequence is 2-C-methyl-D-erythritol 4-phosphate cytidylyltransferase (229 aa).

Belongs to the IspD/TarI cytidylyltransferase family. IspD subfamily.

It catalyses the reaction 2-C-methyl-D-erythritol 4-phosphate + CTP + H(+) = 4-CDP-2-C-methyl-D-erythritol + diphosphate. Its pathway is isoprenoid biosynthesis; isopentenyl diphosphate biosynthesis via DXP pathway; isopentenyl diphosphate from 1-deoxy-D-xylulose 5-phosphate: step 2/6. Its function is as follows. Catalyzes the formation of 4-diphosphocytidyl-2-C-methyl-D-erythritol from CTP and 2-C-methyl-D-erythritol 4-phosphate (MEP). In Clostridium botulinum (strain Loch Maree / Type A3), this protein is 2-C-methyl-D-erythritol 4-phosphate cytidylyltransferase.